Reading from the N-terminus, the 883-residue chain is Phosphoenolpyruvate carboxylase (883 aa).

Residues His138 and Lys546 contribute to the active site.

The protein belongs to the PEPCase type 1 family. Mg(2+) is required as a cofactor.

It carries out the reaction oxaloacetate + phosphate = phosphoenolpyruvate + hydrogencarbonate. In terms of biological role, forms oxaloacetate, a four-carbon dicarboxylic acid source for the tricarboxylic acid cycle. The protein is Phosphoenolpyruvate carboxylase of Salmonella choleraesuis (strain SC-B67).